The chain runs to 383 residues: Succinyl-diaminopimelate desuccinylase (383 aa).

His69 serves as a coordination point for Zn(2+). Asp71 is a catalytic residue. Asp103 lines the Zn(2+) pocket. Catalysis depends on Glu137, which acts as the Proton acceptor. Zn(2+) is bound by residues Glu138, Glu166, and His357.

Belongs to the peptidase M20A family. DapE subfamily. Homodimer. It depends on Zn(2+) as a cofactor. Requires Co(2+) as cofactor.

It catalyses the reaction N-succinyl-(2S,6S)-2,6-diaminopimelate + H2O = (2S,6S)-2,6-diaminopimelate + succinate. The protein operates within amino-acid biosynthesis; L-lysine biosynthesis via DAP pathway; LL-2,6-diaminopimelate from (S)-tetrahydrodipicolinate (succinylase route): step 3/3. Catalyzes the hydrolysis of N-succinyl-L,L-diaminopimelic acid (SDAP), forming succinate and LL-2,6-diaminopimelate (DAP), an intermediate involved in the bacterial biosynthesis of lysine and meso-diaminopimelic acid, an essential component of bacterial cell walls. This chain is Succinyl-diaminopimelate desuccinylase, found in Rickettsia prowazekii (strain Madrid E).